The sequence spans 345 residues: Phosphoribosylformylglycinamidine cyclo-ligase (345 aa).

It belongs to the AIR synthase family.

The protein resides in the cytoplasm. It carries out the reaction 2-formamido-N(1)-(5-O-phospho-beta-D-ribosyl)acetamidine + ATP = 5-amino-1-(5-phospho-beta-D-ribosyl)imidazole + ADP + phosphate + H(+). It functions in the pathway purine metabolism; IMP biosynthesis via de novo pathway; 5-amino-1-(5-phospho-D-ribosyl)imidazole from N(2)-formyl-N(1)-(5-phospho-D-ribosyl)glycinamide: step 2/2. The protein is Phosphoribosylformylglycinamidine cyclo-ligase of Escherichia coli O127:H6 (strain E2348/69 / EPEC).